The chain runs to 67 residues: Conotoxin AbVIN (67 aa).

Positions 1–17 are cleaved as a signal peptide; the sequence is VIIIAVLFLTACQLIAT. The propeptide occupies 18 to 40; sequence ASYARSERKHPDLRLSSRNSKLS. Intrachain disulfides connect C43/C57, C50/C61, and C56/C66.

The protein belongs to the conotoxin O1 superfamily. As to expression, expressed by the venom duct.

Its subcellular location is the secreted. The chain is Conotoxin AbVIN from Conus abbreviatus (Abbreviated cone).